Here is a 396-residue protein sequence, read N- to C-terminus: Elongation factor Tu 2 (396 aa).

The 197-residue stretch at 10–206 (KPHVNIGTIG…AVDSYIPTPQ (197 aa)) folds into the tr-type G domain. Residues 19-26 (GHVDHGKT) form a G1 region. 19–26 (GHVDHGKT) is a binding site for GTP. Threonine 26 contacts Mg(2+). A G2 region spans residues 60 to 64 (GITIS). Positions 81–84 (DCPG) are G3. Residues 81–85 (DCPGH) and 136–139 (NKVD) each bind GTP. Residues 136-139 (NKVD) are G4. The tract at residues 174–176 (SAL) is G5.

The protein belongs to the TRAFAC class translation factor GTPase superfamily. Classic translation factor GTPase family. EF-Tu/EF-1A subfamily. In terms of assembly, monomer.

The protein localises to the cytoplasm. The enzyme catalyses GTP + H2O = GDP + phosphate + H(+). Its function is as follows. GTP hydrolase that promotes the GTP-dependent binding of aminoacyl-tRNA to the A-site of ribosomes during protein biosynthesis. The sequence is that of Elongation factor Tu 2 from Myxococcus xanthus (strain DK1622).